The primary structure comprises 170 residues: Peptide deformylase (170 aa).

Cysteine 91 and histidine 133 together coordinate Fe cation. Glutamate 134 is an active-site residue. Histidine 137 is a binding site for Fe cation.

This sequence belongs to the polypeptide deformylase family. Fe(2+) serves as cofactor.

The enzyme catalyses N-terminal N-formyl-L-methionyl-[peptide] + H2O = N-terminal L-methionyl-[peptide] + formate. In terms of biological role, removes the formyl group from the N-terminal Met of newly synthesized proteins. Requires at least a dipeptide for an efficient rate of reaction. N-terminal L-methionine is a prerequisite for activity but the enzyme has broad specificity at other positions. The protein is Peptide deformylase of Pectobacterium carotovorum subsp. carotovorum (strain PC1).